The primary structure comprises 95 residues: Citrate lyase acyl carrier protein (95 aa).

S14 carries the O-(phosphoribosyl dephospho-coenzyme A)serine modification.

The protein belongs to the CitD family. Oligomer with a subunit composition of (alpha,beta,gamma)6.

The protein localises to the cytoplasm. Covalent carrier of the coenzyme of citrate lyase. The chain is Citrate lyase acyl carrier protein from Haemophilus influenzae (strain 86-028NP).